The chain runs to 497 residues: Probable cytosol aminopeptidase (497 aa).

Mn(2+)-binding residues include Lys-263 and Asp-268. Residue Lys-275 is part of the active site. Residues Asp-286, Asp-345, and Glu-347 each coordinate Mn(2+). The active site involves Arg-349.

This sequence belongs to the peptidase M17 family. The cofactor is Mn(2+).

The protein resides in the cytoplasm. It carries out the reaction Release of an N-terminal amino acid, Xaa-|-Yaa-, in which Xaa is preferably Leu, but may be other amino acids including Pro although not Arg or Lys, and Yaa may be Pro. Amino acid amides and methyl esters are also readily hydrolyzed, but rates on arylamides are exceedingly low.. The catalysed reaction is Release of an N-terminal amino acid, preferentially leucine, but not glutamic or aspartic acids.. Presumably involved in the processing and regular turnover of intracellular proteins. Catalyzes the removal of unsubstituted N-terminal amino acids from various peptides. The polypeptide is Probable cytosol aminopeptidase (Brucella ovis (strain ATCC 25840 / 63/290 / NCTC 10512)).